Reading from the N-terminus, the 122-residue chain is Small ribosomal subunit protein uS8c (122 aa).

Belongs to the universal ribosomal protein uS8 family. As to quaternary structure, part of the 30S ribosomal subunit.

Its subcellular location is the plastid. It localises to the chloroplast. In terms of biological role, one of the primary rRNA binding proteins, it binds directly to 16S rRNA central domain where it helps coordinate assembly of the platform of the 30S subunit. This chain is Small ribosomal subunit protein uS8c (rps8), found in Ostreococcus tauri.